The following is a 110-amino-acid chain: Large ribosomal subunit protein uL22 (110 aa).

It belongs to the universal ribosomal protein uL22 family. Part of the 50S ribosomal subunit.

This protein binds specifically to 23S rRNA; its binding is stimulated by other ribosomal proteins, e.g. L4, L17, and L20. It is important during the early stages of 50S assembly. It makes multiple contacts with different domains of the 23S rRNA in the assembled 50S subunit and ribosome. Functionally, the globular domain of the protein is located near the polypeptide exit tunnel on the outside of the subunit, while an extended beta-hairpin is found that lines the wall of the exit tunnel in the center of the 70S ribosome. This Cellvibrio japonicus (strain Ueda107) (Pseudomonas fluorescens subsp. cellulosa) protein is Large ribosomal subunit protein uL22.